Consider the following 236-residue polypeptide: 2-C-methyl-D-erythritol 4-phosphate cytidylyltransferase (236 aa).

The protein belongs to the IspD/TarI cytidylyltransferase family. IspD subfamily.

The catalysed reaction is 2-C-methyl-D-erythritol 4-phosphate + CTP + H(+) = 4-CDP-2-C-methyl-D-erythritol + diphosphate. The protein operates within isoprenoid biosynthesis; isopentenyl diphosphate biosynthesis via DXP pathway; isopentenyl diphosphate from 1-deoxy-D-xylulose 5-phosphate: step 2/6. Its function is as follows. Catalyzes the formation of 4-diphosphocytidyl-2-C-methyl-D-erythritol from CTP and 2-C-methyl-D-erythritol 4-phosphate (MEP). The polypeptide is 2-C-methyl-D-erythritol 4-phosphate cytidylyltransferase (Azoarcus sp. (strain BH72)).